A 35-amino-acid chain; its full sequence is Basic endochitinase CH1 (35 aa).

Belongs to the glycosyl hydrolase 19 family. Chitinase class I subfamily.

It carries out the reaction Random endo-hydrolysis of N-acetyl-beta-D-glucosaminide (1-&gt;4)-beta-linkages in chitin and chitodextrins.. Defense against chitin-containing fungal pathogens. The sequence is that of Basic endochitinase CH1 from Castanea sativa (Sweet chestnut).